The sequence spans 562 residues: Dihydroxy-acid dehydratase (562 aa).

Asp-80 is a Mg(2+) binding site. Cys-121 contributes to the [2Fe-2S] cluster binding site. The Mg(2+) site is built by Asp-122 and Lys-123. An N6-carboxylysine modification is found at Lys-123. Cys-194 contacts [2Fe-2S] cluster. Glu-446 contributes to the Mg(2+) binding site. Residue Ser-472 is the Proton acceptor of the active site.

This sequence belongs to the IlvD/Edd family. Homodimer. Requires [2Fe-2S] cluster as cofactor. It depends on Mg(2+) as a cofactor.

The catalysed reaction is (2R)-2,3-dihydroxy-3-methylbutanoate = 3-methyl-2-oxobutanoate + H2O. It catalyses the reaction (2R,3R)-2,3-dihydroxy-3-methylpentanoate = (S)-3-methyl-2-oxopentanoate + H2O. The protein operates within amino-acid biosynthesis; L-isoleucine biosynthesis; L-isoleucine from 2-oxobutanoate: step 3/4. Its pathway is amino-acid biosynthesis; L-valine biosynthesis; L-valine from pyruvate: step 3/4. Functionally, functions in the biosynthesis of branched-chain amino acids. Catalyzes the dehydration of (2R,3R)-2,3-dihydroxy-3-methylpentanoate (2,3-dihydroxy-3-methylvalerate) into 2-oxo-3-methylpentanoate (2-oxo-3-methylvalerate) and of (2R)-2,3-dihydroxy-3-methylbutanoate (2,3-dihydroxyisovalerate) into 2-oxo-3-methylbutanoate (2-oxoisovalerate), the penultimate precursor to L-isoleucine and L-valine, respectively. The protein is Dihydroxy-acid dehydratase of Staphylococcus aureus (strain COL).